A 304-amino-acid chain; its full sequence is GS homeobox 2 (304 aa).

Positions 116–151 (AQFCPRVNHAHHHHHPPQHHHHHHQPQQPGSAAAAA) are disordered. Residues 123–140 (NHAHHHHHPPQHHHHHHQ) are compositionally biased toward basic residues. Low complexity predominate over residues 141–151 (PQQPGSAAAAA). A DNA-binding region (homeobox) is located at residues 202–261 (GKRMRTAFTSTQLLELEREFSSNMYLSRLRRIEIATYLNLSEKQVKIWFQNRRVKHKKEG). The interval 283–304 (RSEDEDSLSPASANDDKEISPL) is disordered.

The protein belongs to the Antp homeobox family.

It is found in the nucleus. The protein localises to the cytoplasm. In terms of biological role, transcription factor that binds 5'-CNAATTAG-3' DNA sequence and regulates the expression of numerous genes including genes important for brain development. During telencephalic development, causes ventralization of pallial progenitors and, depending on the developmental stage, specifies different neuronal fates. At early stages, necessary and sufficient to correctly specify the ventral lateral ganglionic eminence (LGE) and its major derivatives, the striatal projection neurons. At later stages, may specify LGE progenitors toward dorsal LGE fates, including olfactory bulb interneurons. The protein is GS homeobox 2 (GSX2) of Homo sapiens (Human).